Reading from the N-terminus, the 401-residue chain is Propionate kinase (401 aa).

N11 and K18 together coordinate ATP. Residue N11 participates in Mg(2+) binding. Residue R86 coordinates substrate. Catalysis depends on D143, which acts as the Proton donor/acceptor. Residues H175, 203-207, 278-280, and 326-330 contribute to the ATP site; these read HLGNG, DLR, and GIGEN.

Belongs to the acetokinase family. TdcD subfamily. As to quaternary structure, homodimer. Requires Mg(2+) as cofactor.

The enzyme catalyses propanoate + ATP = propanoyl phosphate + ADP. It participates in amino-acid degradation; L-threonine degradation via propanoate pathway; propanoate from L-threonine: step 4/4. Functionally, catalyzes the conversion of propionyl phosphate and ADP to propionate and ATP. The sequence is that of Propionate kinase from Klebsiella pneumoniae (strain 342).